We begin with the raw amino-acid sequence, 302 residues long: Uricase (302 aa).

S2 is modified (N-acetylserine). Residues K11 and T58 each act as charge relay system in the active site. 5-hydroxyisourate is bound by residues T58, D59, F160, R177, V228, Q229, and N255. T58 lines the O2 pocket. Urate contacts are provided by T58, D59, F160, R177, V228, Q229, and N255. N255 contributes to the O2 binding site. H257 acts as the Charge relay system in catalysis. The Microbody targeting signal signature appears at 300-302; that stretch reads SKL.

The protein belongs to the uricase family. As to quaternary structure, homotetramer.

The protein resides in the peroxisome. It carries out the reaction urate + O2 + H2O = 5-hydroxyisourate + H2O2. The protein operates within purine metabolism; urate degradation; (S)-allantoin from urate: step 1/3. With respect to regulation, 8-Azaxanthine is one of the most potent competitive inhibitors of uricase activity. Hypoxanthine has only a small inhibitor effect, and caffeine has no effect at all. Azide not only competes with dioxygen but also competes with the substrate for its enzymatic site. Urate oxidase is a cofactorless enzyme involved in the metabolism of purines. Catalyzes, in the presence of molecular oxygen, the hydroxylation of uric acid to metastable 5-hydroxyisourate (5-HIU) which is further degraded to allantoin. This chain is Uricase, found in Aspergillus flavus.